A 139-amino-acid chain; its full sequence is Putative pre-16S rRNA nuclease (139 aa).

It belongs to the YqgF nuclease family.

It is found in the cytoplasm. Its function is as follows. Could be a nuclease involved in processing of the 5'-end of pre-16S rRNA. This is Putative pre-16S rRNA nuclease from Thermoanaerobacter pseudethanolicus (strain ATCC 33223 / 39E) (Clostridium thermohydrosulfuricum).